The chain runs to 44 residues: Photosystem I reaction center subunit IX (44 aa).

A helical membrane pass occupies residues 7-27 (YLSVAPVLSTLWFGSLAGLLI).

This sequence belongs to the PsaJ family.

It is found in the plastid. The protein localises to the chloroplast thylakoid membrane. In terms of biological role, may help in the organization of the PsaE and PsaF subunits. The polypeptide is Photosystem I reaction center subunit IX (Lactuca sativa (Garden lettuce)).